The primary structure comprises 557 residues: Glypican-1 (557 aa).

Residues 1–23 form the signal peptide; the sequence is MELRTRGWWLLCAAAALVVCARG. 7 disulfide bridges follow: cysteine 32/cysteine 68, cysteine 62/cysteine 255, cysteine 69/cysteine 258, cysteine 190/cysteine 342, cysteine 245/cysteine 278, cysteine 267/cysteine 414, and cysteine 271/cysteine 400. Residues asparagine 79 and asparagine 116 are each glycosylated (N-linked (GlcNAc...) asparagine). The tract at residues 477–531 is disordered; that stretch reads FQDASDDGSGSGSGGGCPDDTCGRRVSKKSSSSRTPLTHALPGLSEQEGQKTSAA. Serine 485, serine 487, and serine 489 each carry an O-linked (Xyl...) (heparan sulfate) serine glycan. Serine 529 is lipidated: GPI-anchor amidated serine. Residues 530–557 constitute a propeptide, removed in mature form; it reads AATCPEPHSFFLLFLVTLVLAAARPRWR.

Belongs to the glypican family. Post-translationally, S-nitrosylated in a Cu(2+)-dependent manner. Nitric acid (NO) is released from the nitrosylated cysteines by ascorbate or by some other reducing agent, in a Cu(2+) or Zn(2+) dependent manner. This free nitric oxide is then capable of cleaving the heparan sulfate side chains. In terms of processing, N- and O-glycosylated. N-glycosylation is mainly of the complex type containing sialic acid. O-glycosylated with heparan sulfate. The heparan sulfate chains can be cleaved either by the action of heparanase or, degraded by a deaminative process that uses nitric oxide (NO) released from the S-nitrosylated cysteines. This process is triggered by ascorbate, or by some other reducing agent, in a Cu(2+)- or Zn(2+) dependent manner. Cu(2+) ions are provided by ceruloproteins such as APP, PRNP or CP which associate with GCP1 in intracellular compartments or lipid rafts. This cell-associated glypican is further processed to give rise to a medium-released species.

The protein localises to the cell membrane. It localises to the endosome. It is found in the secreted. The protein resides in the extracellular space. Functionally, cell surface proteoglycan that bears heparan sulfate. Binds, via the heparan sulfate side chains, alpha-4 (V) collagen and participates in Schwann cell myelination. May act as a catalyst in increasing the rate of conversion of prion protein PRPN(C) to PRNP(Sc) via associating (via the heparan sulfate side chains) with both forms of PRPN, targeting them to lipid rafts and facilitating their interaction. Required for proper skeletal muscle differentiation by sequestering FGF2 in lipid rafts preventing its binding to receptors (FGFRs) and inhibiting the FGF-mediated signaling. Binds Cu(2+) or Zn(2+) ions. In Mus musculus (Mouse), this protein is Glypican-1 (Gpc1).